Here is a 469-residue protein sequence, read N- to C-terminus: 3-isopropylmalate dehydratase large subunit (469 aa).

Positions 349, 410, and 413 each coordinate [4Fe-4S] cluster.

Belongs to the aconitase/IPM isomerase family. LeuC type 1 subfamily. Heterodimer of LeuC and LeuD. Requires [4Fe-4S] cluster as cofactor.

The enzyme catalyses (2R,3S)-3-isopropylmalate = (2S)-2-isopropylmalate. The protein operates within amino-acid biosynthesis; L-leucine biosynthesis; L-leucine from 3-methyl-2-oxobutanoate: step 2/4. Functionally, catalyzes the isomerization between 2-isopropylmalate and 3-isopropylmalate, via the formation of 2-isopropylmaleate. This chain is 3-isopropylmalate dehydratase large subunit, found in Neisseria gonorrhoeae (strain ATCC 700825 / FA 1090).